Consider the following 137-residue polypeptide: Large ribosomal subunit protein uL16 (137 aa).

The protein belongs to the universal ribosomal protein uL16 family. Part of the 50S ribosomal subunit.

Functionally, binds 23S rRNA and is also seen to make contacts with the A and possibly P site tRNAs. This chain is Large ribosomal subunit protein uL16, found in Lactococcus lactis subsp. cremoris (strain SK11).